A 245-amino-acid chain; its full sequence is RNA polymerase sigma factor SigI5 (245 aa).

The Polymerase core binding motif lies at 60 to 73; that stretch reads DEYSIGLMAFNEAI. The H-T-H motif DNA-binding region spans 202–221; it reads MKELSKIIDVHPKTVERNRA.

Belongs to the sigma-70 factor family. SigI subfamily. As to quaternary structure, interacts with RsgI5.

The protein localises to the cytoplasm. Negatively regulated by the anti-sigma-I factor RsgI5. Binding of the polysaccharide substrate to RsgI5 may lead to the release and activation of SigI5. Sigma factors are initiation factors that promote the attachment of RNA polymerase to specific initiation sites and are then released. This sigma factor is involved in regulation of cellulosomal genes via an external polysaccharide-sensing mechanism. The sequence is that of RNA polymerase sigma factor SigI5 from Acetivibrio thermocellus (strain ATCC 27405 / DSM 1237 / JCM 9322 / NBRC 103400 / NCIMB 10682 / NRRL B-4536 / VPI 7372) (Clostridium thermocellum).